Here is a 384-residue protein sequence, read N- to C-terminus: MALNDCFLLNLEVDHFMHCNISSHSADLPVNDDWSHPGILYVIPAVYGVIILIGLIGNITLIKIFCTVKSMRNVPNLFISSLALGDLLLLITCAPVDASRYLADRWLFGRIGCKLIPFIQLTSVGVSVFTLTALSADRYKAIVRPMDIQASHALMKICLKAAFIWIISMLLAIPEAVFSDLHPFHEESTNQTFISCAPYPHSNELHPKIHSMASFLVFYVIPLSIISVYYYFIAKNLIQSAYNLPVEGNIHVKKQIESRKRLAKTVLVFVGLFAFCWLPNHVIYLYRSYHYSEVDTSMLHFVTSICARLLAFTNSCVNPFALYLLSKSFRKQFNTQLLCCQPGLIIRSHSTGRSTTCMTSLKSTNPSVATFSLINGNICHERYV.

At 1-38 (MALNDCFLLNLEVDHFMHCNISSHSADLPVNDDWSHPG) the chain is on the extracellular side. N-linked (GlcNAc...) asparagine glycosylation is present at Asn-20. Residues 39-62 (ILYVIPAVYGVIILIGLIGNITLI) form a helical membrane-spanning segment. The Cytoplasmic portion of the chain corresponds to 63 to 76 (KIFCTVKSMRNVPN). Residues 77–96 (LFISSLALGDLLLLITCAPV) traverse the membrane as a helical segment. Residues 97-114 (DASRYLADRWLFGRIGCK) are Extracellular-facing. An intrachain disulfide couples Cys-113 to Cys-196. A helical transmembrane segment spans residues 115 to 136 (LIPFIQLTSVGVSVFTLTALSA). Over 137–152 (DRYKAIVRPMDIQASH) the chain is Cytoplasmic. Residues 153–174 (ALMKICLKAAFIWIISMLLAIP) form a helical membrane-spanning segment. The Extracellular portion of the chain corresponds to 175–208 (EAVFSDLHPFHEESTNQTFISCAPYPHSNELHPK). The chain crosses the membrane as a helical span at residues 209-234 (IHSMASFLVFYVIPLSIISVYYYFIA). The Cytoplasmic portion of the chain corresponds to 235–264 (KNLIQSAYNLPVEGNIHVKKQIESRKRLAK). Residues 265–285 (TVLVFVGLFAFCWLPNHVIYL) form a helical membrane-spanning segment. Topologically, residues 286-298 (YRSYHYSEVDTSM) are extracellular. The helical transmembrane segment at 299-325 (LHFVTSICARLLAFTNSCVNPFALYLL) threads the bilayer. Topologically, residues 326-384 (SKSFRKQFNTQLLCCQPGLIIRSHSTGRSTTCMTSLKSTNPSVATFSLINGNICHERYV) are cytoplasmic. Cys-339 is lipidated: S-palmitoyl cysteine. A Phosphoserine modification is found at Ser-350.

It belongs to the G-protein coupled receptor 1 family. As to expression, highly expressed in pancreas. Also expressed in stomach, adrenal cortex and brain. In brain, expressed in cells throughout the cortex.

The protein resides in the cell membrane. Its function is as follows. Receptor for gastrin-releasing peptide (GRP). Signals via association with G proteins that activate a phosphatidylinositol-calcium second messenger system, resulting in Akt phosphorylation. Contributes to the regulation of food intake. Contributes to the perception of prurient stimuli and transmission of itch signals in the spinal cord that promote scratching behavior, but does not play a role in the perception of pain. Contributes primarily to nonhistaminergic itch sensation. In one study, shown to act in the amygdala as part of an inhibitory network which inhibits memory specifically related to learned fear. In another study, shown to contribute to disinhibition of glutamatergic cells in the auditory cortex via signaling on vasoactive intestinal peptide-expressing cells which leads to enhanced auditory fear memories. Contributes to the induction of sighing through signaling in the pre-Botzinger complex, a cluster of several thousand neurons in the ventrolateral medulla responsible for inspiration during respiratory activity. The chain is Gastrin-releasing peptide receptor (GRPR) from Homo sapiens (Human).